The chain runs to 381 residues: tRNA (guanine(6)-N2)-methyltransferase (381 aa).

The 115-residue stretch at 43-157 folds into the THUMP domain; the sequence is KLIPKINYLS…FDELIVGIDT (115 aa). S-adenosyl-L-methionine is bound by residues 173-177, 204-206, Asp261, 289-290, and Asn306; these read HPAHL, SGT, and DA.

It belongs to the methyltransferase superfamily.

It is found in the cytoplasm. It carries out the reaction guanosine(6) in tRNA + S-adenosyl-L-methionine = N(2)-methylguanosine(6) in tRNA + S-adenosyl-L-homocysteine + H(+). Its function is as follows. S-adenosyl-L-methionine-dependent methyltransferase that catalyzes the methylation of the guanosine nucleotide at position 6 (m2G6) in tRNA(Cys). The polypeptide is tRNA (guanine(6)-N2)-methyltransferase (Methanocaldococcus jannaschii (strain ATCC 43067 / DSM 2661 / JAL-1 / JCM 10045 / NBRC 100440) (Methanococcus jannaschii)).